The chain runs to 386 residues: S-adenosylmethionine synthase (386 aa).

An ATP-binding site is contributed by histidine 17. Aspartate 19 lines the Mg(2+) pocket. Glutamate 45 serves as a coordination point for K(+). L-methionine-binding residues include glutamate 58 and glutamine 101. Residues glutamine 101 to glutamate 111 are flexible loop. ATP contacts are provided by residues aspartate 168–lysine 170, aspartate 242, arginine 248–lysine 249, alanine 265, and lysine 269. Residue aspartate 242 coordinates L-methionine. Residue lysine 273 coordinates L-methionine.

The protein belongs to the AdoMet synthase family. Homotetramer; dimer of dimers. Mg(2+) is required as a cofactor. K(+) serves as cofactor.

The protein localises to the cytoplasm. It carries out the reaction L-methionine + ATP + H2O = S-adenosyl-L-methionine + phosphate + diphosphate. It participates in amino-acid biosynthesis; S-adenosyl-L-methionine biosynthesis; S-adenosyl-L-methionine from L-methionine: step 1/1. Its function is as follows. Catalyzes the formation of S-adenosylmethionine (AdoMet) from methionine and ATP. The overall synthetic reaction is composed of two sequential steps, AdoMet formation and the subsequent tripolyphosphate hydrolysis which occurs prior to release of AdoMet from the enzyme. The protein is S-adenosylmethionine synthase of Leptospira interrogans serogroup Icterohaemorrhagiae serovar copenhageni (strain Fiocruz L1-130).